A 68-amino-acid polypeptide reads, in one-letter code: Large ribosomal subunit protein uL29 (68 aa).

It belongs to the universal ribosomal protein uL29 family.

This is Large ribosomal subunit protein uL29 (rpl29) from Pyrococcus horikoshii (strain ATCC 700860 / DSM 12428 / JCM 9974 / NBRC 100139 / OT-3).